The primary structure comprises 965 residues: Iron-responsive element-binding protein 2 (965 aa).

Positions 142-170 are disordered; the sequence is NAPNPGGGEAQKPTAKLSPLKGQPRKLPC. Cys-514, Cys-580, and Cys-583 together coordinate [4Fe-4S] cluster.

The protein belongs to the aconitase/IPM isomerase family. [4Fe-4S] cluster is required as a cofactor. Ubiquitinated and degraded by the proteasome in presence of high level of iron and oxygen.

It is found in the cytoplasm. Its function is as follows. RNA-binding protein that binds to iron-responsive elements (IRES), which are stem-loop structures found in the 5'-UTR of ferritin, and delta aminolevulinic acid synthase mRNAs, and in the 3'-UTR of transferrin receptor mRNA. Binding to the IRE element in ferritin results in the repression of its mRNA translation. Binding of the protein to the transferrin receptor mRNA inhibits the degradation of this otherwise rapidly degraded mRNA. The polypeptide is Iron-responsive element-binding protein 2 (IREB2) (Gallus gallus (Chicken)).